The sequence spans 716 residues: Polyribonucleotide nucleotidyltransferase (716 aa).

Aspartate 493 and aspartate 499 together coordinate Mg(2+). The KH domain occupies 560–619; sequence PRMITIKINPEKIRDVIGKGGSVIRALTEETGTTIDISDDGVVTIASTSSEGMAEAKKRI. An S1 motif domain is found at 629–697; the sequence is GQVYEGTVLK…EKGRVRLSAK (69 aa).

The protein belongs to the polyribonucleotide nucleotidyltransferase family. Mg(2+) is required as a cofactor.

It is found in the cytoplasm. It carries out the reaction RNA(n+1) + phosphate = RNA(n) + a ribonucleoside 5'-diphosphate. Involved in mRNA degradation. Catalyzes the phosphorolysis of single-stranded polyribonucleotides processively in the 3'- to 5'-direction. The sequence is that of Polyribonucleotide nucleotidyltransferase from Paraburkholderia xenovorans (strain LB400).